The following is a 435-amino-acid chain: Eukaryotic peptide chain release factor subunit 1-3 (435 aa).

Alanine 2 is modified (N-acetylalanine).

The protein belongs to the eukaryotic release factor 1 family. As to quaternary structure, heterodimer of two subunits, one of which binds GTP.

It is found in the cytoplasm. In terms of biological role, directs the termination of nascent peptide synthesis (translation) in response to the termination codons UAA, UAG and UGA. Modulates plant growth and development. This Arabidopsis thaliana (Mouse-ear cress) protein is Eukaryotic peptide chain release factor subunit 1-3 (ERF1-3).